Here is a 540-residue protein sequence, read N- to C-terminus: PTS system alpha-glucoside-specific EIICB component (540 aa).

Residues 1 to 420 (MLSQIQRFGG…LNLKTPGREE (420 aa)) enclose the PTS EIIC type-1 domain. Helical transmembrane passes span 12–32 (MFTPVLLFPFAGIVVGIAIML), 87–107 (ACLAVLVSFLTWNYFINAMGM), 130–150 (IAGIKTLDTSIIGAIVISGLV), 174–194 (FVVIVAFLAMIPCAWLTLLGW), 201–221 (IESLQAFLRSAGALGVWVYIF), 225–245 (ILIPTGLHHFVYGPFIFGPAV), 277–297 (FALHGNSKVFGSVGIALALYF), 307–327 (VAGLLIPATLTAMLVGITEPL), 329–349 (FTFLFISPLLFAVHAVLAATM), 352–372 (VMYICGVVGNFGGGLLDQFLP), and 384–404 (SMMFIQIGIGLCFTALYFVVF). Residues 448-530 (LGQAAGFLQA…ENLMKDSLST (83 aa)) enclose the PTS EIIB type-1 domain. Cys-470 serves as the catalytic Phosphocysteine intermediate; for EIIB activity.

The protein resides in the cell membrane. In terms of biological role, the phosphoenolpyruvate-dependent sugar phosphotransferase system (sugar PTS), a major carbohydrate active -transport system, catalyzes the phosphorylation of incoming sugar substrates concomitantly with their translocation across the cell membrane. This system is involved in alpha-glucoside transport. Its function is as follows. Involved in the transport and simultaneous phosphorylation at O-6 of the glucosyl moiety of sucrose and its five linkage-isomeric alpha-D-glucosyl-D-fructoses. Can also transport maltose, isomaltose and maltitol, phosphorylating at O-6 of their non-reducing glucose portion. The polypeptide is PTS system alpha-glucoside-specific EIICB component (aglA) (Klebsiella pneumoniae).